The following is a 296-amino-acid chain: Acetyl-coenzyme A carboxylase carboxyl transferase subunit beta (296 aa).

In terms of domain architecture, CoA carboxyltransferase N-terminal spans 26-295 (VWTKCTNCEQ…PFKVGELIIE (270 aa)). Zn(2+)-binding residues include Cys-30, Cys-33, Cys-49, and Cys-52. The segment at 30-52 (CTNCEQVLYSEELKRNMQVCPKC) adopts a C4-type zinc-finger fold.

This sequence belongs to the AccD/PCCB family. As to quaternary structure, acetyl-CoA carboxylase is a heterohexamer composed of biotin carboxyl carrier protein (AccB), biotin carboxylase (AccC) and two subunits each of ACCase subunit alpha (AccA) and ACCase subunit beta (AccD). Zn(2+) serves as cofactor.

The protein localises to the cytoplasm. The enzyme catalyses N(6)-carboxybiotinyl-L-lysyl-[protein] + acetyl-CoA = N(6)-biotinyl-L-lysyl-[protein] + malonyl-CoA. It participates in lipid metabolism; malonyl-CoA biosynthesis; malonyl-CoA from acetyl-CoA: step 1/1. Functionally, component of the acetyl coenzyme A carboxylase (ACC) complex. Biotin carboxylase (BC) catalyzes the carboxylation of biotin on its carrier protein (BCCP) and then the CO(2) group is transferred by the transcarboxylase to acetyl-CoA to form malonyl-CoA. The sequence is that of Acetyl-coenzyme A carboxylase carboxyl transferase subunit beta from Haemophilus ducreyi (strain 35000HP / ATCC 700724).